A 519-amino-acid chain; its full sequence is Na(+)/H(+) exchange regulatory cofactor NHE-RF3 (519 aa).

3 PDZ domains span residues 9-90 (ECKL…LDGD), 134-215 (RLCY…VDKE), and 243-323 (IVEM…VDKE). Phosphoserine occurs at positions 148, 192, 250, 334, and 348. Residues 347–374 (GSVKEAPAPTPTSLEVSSPPDTTEEVDH) are disordered. Positions 357 to 367 (PTSLEVSSPPD) are enriched in polar residues. The region spanning 378–458 (LCRLAKGENG…NVTLLVCGKK (81 aa)) is the PDZ 4 domain. At Thr451 the chain carries Phosphothreonine. Positions 473–519 (SLADPPDTPPDSKEGIVVESKHDSHMAKERAHSTASHSSSNSEDTEM) are disordered. Over residues 482 to 504 (PDSKEGIVVESKHDSHMAKERAH) the composition is skewed to basic and acidic residues. Phosphoserine is present on residues Ser492, Ser508, Ser510, Ser511, Ser512, and Ser514. Residues 505-519 (STASHSSSNSEDTEM) are compositionally biased toward low complexity.

Belongs to the NHER family. As to quaternary structure, interacts with PDZK1IP1 and ABCC2. Binds to the C-terminal region of SLC26A3. Interacts (via PDZ domains 1 and 3) with SCARB1 (C-terminal domain). Forms a heterodimeric complex with NHERF1. Interacts with AKAP2, BCR, CFTR, SLCO1A1, SLC22A12, SLC22A4, SLC22A5, NHERF2 and SLC17A1. Component of a complex, composed of PDZK1, SYNGAP1, KLHL17 and NMDA receptors. Interacts (via PDZ1 domain) directly with KLHL17; the interaction is important for integrity of actin cytoskeleton structures in neurons. Interacts (via C-terminal PDZ domain) with SLC26A6 (via C-terminal domain). Interacts (via C-terminal PDZ domain) with SLC9A3 (via C-terminal domain). Interacts (via the first PDZ domain) with PTGIR (via non-isoprenylated C-terminus). Interacts (via PDZ domains 1 and 3) with SLC5A8 (via PDZ-binding motif); interaction increases nicotinate transport activity of SLC5A8.

The protein localises to the membrane. It localises to the cell membrane. Its function is as follows. A scaffold protein that connects plasma membrane proteins and regulatory components, regulating their surface expression in epithelial cells apical domains. May be involved in the coordination of a diverse range of regulatory processes for ion transport and second messenger cascades. In complex with NHERF1, may cluster proteins that are functionally dependent in a mutual fashion and modulate the trafficking and the activity of the associated membrane proteins. May play a role in the cellular mechanisms associated with multidrug resistance through its interaction with ABCC2 and PDZK1IP1. May potentiate the CFTR chloride channel activity. Required for normal cell-surface expression of SCARB1. Plays a role in maintaining normal plasma cholesterol levels via its effects on SCARB1. Plays a role in the normal localization and function of the chloride-anion exchanger SLC26A6 to the plasma membrane in the brush border of the proximal tubule of the kidney. May be involved in the regulation of proximal tubular Na(+)-dependent inorganic phosphate cotransport therefore playing an important role in tubule function. In Pongo abelii (Sumatran orangutan), this protein is Na(+)/H(+) exchange regulatory cofactor NHE-RF3 (PDZK1).